A 1320-amino-acid polypeptide reads, in one-letter code: CAP-Gly domain-containing linker protein 1 (1320 aa).

The interval 1–53 (MSMLKPSGLKAPTKILKPGSTALKTPAAAAAPLEKTVPSEKASGPPSSETQEE) is disordered. Low complexity predominate over residues 21 to 35 (TALKTPAAAAAPLEK). The residue at position 48 (Ser48) is a Phosphoserine. The residue at position 50 (Thr50) is a Phosphothreonine. The CAP-Gly 1 domain occupies 78–120 (GETQFAPGQWAGIVLDEPIGKNDGSVAGVRYFQCEPLKGIFTR). The important for tubulin binding stretch occupies residues 97-101 (GKNDG). Ser146 carries the phosphoserine modification. A compositionally biased stretch (polar residues) spans 156–171 (VSSSPATPSNIPQKPS). Residues 156 to 181 (VSSSPATPSNIPQKPSQPVAKETSAT) are disordered. The residue at position 181 (Thr181) is a Phosphothreonine. Residues Ser194, Ser196, Ser199, and Ser203 each carry the phosphoserine modification. Positions 231 to 273 (GETDFAKGEWCGVELDEPLGKNDGAVAGTRYFQCQPKYGLFAP) constitute a CAP-Gly 2 domain. Residues 301 to 331 (TTPASLKRSPSASSLSSMSSVASSVSSKPSR) are compositionally biased toward low complexity. Residues 301-338 (TTPASLKRSPSASSLSSMSSVASSVSSKPSRTGLLTET) are disordered. A Phosphoserine modification is found at Ser309. Position 311 is a phosphoserine; by PKA (Ser311). 2 positions are modified to phosphoserine: Ser314 and Ser347. Residues 1089 to 1109 (SLPSNTLRESEYRKDADEEKA) are disordered. A compositionally biased stretch (basic and acidic residues) spans 1096–1109 (RESEYRKDADEEKA). Ser1116 bears the Phosphoserine mark. Positions 1178–1201 (KRQLSSSSGNTDVQTEEDERAQES) are disordered. Over residues 1180-1190 (QLSSSSGNTDV) the composition is skewed to polar residues. Ser1246 is modified (phosphoserine). The CCHC-type zinc finger occupies 1299–1316 (PYCEICEMFGHWATNCND).

Interacts with MTOR; phosphorylates and regulates CLIP1. Interacts (via CAP-Gly domains) with tubulin and TUBA1B. Interacts with SLAIN2. Interacts with MAPRE1 and MAPRE3. Interacts (via zinc finger) with DCTN1. Binds preferentially to tyrosinated microtubules, and only marginally to detyrosinated microtubules. Phosphorylated. Phosphorylation induces conformational changes by increasing the affinity of the N-terminus for C-terminus, resulting in inhibition of its function thus decreasing its binding to microtubules and DCTN1. Exhibits a folded, autoinhibited conformation when phosphorylated and an open conformation when dephosphorylated with increased binding affinity to microtubules and DCTN1. Phosphorylation regulates its recruitment to tyrosinated microtubules and the recruitment of vesicular cargo to microtubules in neurons. Phosphorylation by MTOR may positively regulate CLIP1 association with microtubules.

It is found in the cytoplasm. The protein resides in the cytoskeleton. Its subcellular location is the cytoplasmic vesicle membrane. The protein localises to the cell projection. It localises to the ruffle. Binds to the plus end of microtubules and regulates the dynamics of the microtubule cytoskeleton. Promotes microtubule growth and microtubule bundling. Links cytoplasmic vesicles to microtubules and thereby plays an important role in intracellular vesicle trafficking. Plays a role macropinocytosis and endosome trafficking. The sequence is that of CAP-Gly domain-containing linker protein 1 (Clip1) from Rattus norvegicus (Rat).